A 162-amino-acid chain; its full sequence is Austinoid biosynthesis clusters protein J (162 aa).

The protein belongs to the trt14 isomerase family. Homodimer.

It functions in the pathway secondary metabolite biosynthesis; terpenoid biosynthesis. Part of the gene cluster B that mediates the biosynthesis of austinol and dehydroaustinol, two fungal meroterpenoids. The first step of the pathway is the synthesis of 3,5-dimethylorsellinic acid by the polyketide synthase ausA. 3,5-dimethylorsellinic acid is then prenylated by the polyprenyl transferase ausN. Further epoxidation by the FAD-dependent monooxygenase ausM and cyclization by the probable terpene cyclase ausL lead to the formation of protoaustinoid A. Protoaustinoid A is then oxidized to spiro-lactone preaustinoid A3 by the combined action of the FAD-binding monooxygenases ausB and ausC, and the dioxygenase ausE. Acid-catalyzed keto-rearrangement and ring contraction of the tetraketide portion of preaustinoid A3 by ausJ lead to the formation of preaustinoid A4. The aldo-keto reductase ausK, with the help of ausH, is involved in the next step by transforming preaustinoid A4 into isoaustinone which is in turn hydroxylated by the P450 monooxygenase ausI to form austinolide. Finally, the cytochrome P450 monooxygenase ausG modifies austinolide to austinol. Austinol can be further modified to dehydroaustinol which forms a diffusible complex with diorcinol that initiates conidiation. Due to genetic rearrangements of the clusters and the subsequent loss of some enzymes, the end products of the Emericella nidulans austinoid biosynthesis clusters are austinol and dehydroaustinol, even if additional enzymes, such as the O-acetyltransferase ausQ and the cytochrome P450 monooxygenase ausR are still functional. The polypeptide is Austinoid biosynthesis clusters protein J (Emericella nidulans (strain FGSC A4 / ATCC 38163 / CBS 112.46 / NRRL 194 / M139) (Aspergillus nidulans)).